The following is a 162-amino-acid chain: Nucleotide-binding protein ABSDF0503 (162 aa).

The protein belongs to the YajQ family.

Its function is as follows. Nucleotide-binding protein. This is Nucleotide-binding protein ABSDF0503 from Acinetobacter baumannii (strain SDF).